Reading from the N-terminus, the 160-residue chain is Ribosomal RNA large subunit methyltransferase H (160 aa).

S-adenosyl-L-methionine contacts are provided by residues leucine 77, glycine 109, and 128–133; that span reads FSRLTF.

Belongs to the RNA methyltransferase RlmH family. Homodimer.

Its subcellular location is the cytoplasm. It carries out the reaction pseudouridine(1915) in 23S rRNA + S-adenosyl-L-methionine = N(3)-methylpseudouridine(1915) in 23S rRNA + S-adenosyl-L-homocysteine + H(+). Its function is as follows. Specifically methylates the pseudouridine at position 1915 (m3Psi1915) in 23S rRNA. This Desulfitobacterium hafniense (strain DSM 10664 / DCB-2) protein is Ribosomal RNA large subunit methyltransferase H.